We begin with the raw amino-acid sequence, 427 residues long: Glutamate-1-semialdehyde 2,1-aminomutase 1 (427 aa).

Position 267 is an N6-(pyridoxal phosphate)lysine (Lys-267).

Belongs to the class-III pyridoxal-phosphate-dependent aminotransferase family. HemL subfamily. In terms of assembly, homodimer. Requires pyridoxal 5'-phosphate as cofactor.

It localises to the cytoplasm. The enzyme catalyses (S)-4-amino-5-oxopentanoate = 5-aminolevulinate. Its pathway is porphyrin-containing compound metabolism; protoporphyrin-IX biosynthesis; 5-aminolevulinate from L-glutamyl-tRNA(Glu): step 2/2. This is Glutamate-1-semialdehyde 2,1-aminomutase 1 from Staphylococcus epidermidis (strain ATCC 35984 / DSM 28319 / BCRC 17069 / CCUG 31568 / BM 3577 / RP62A).